The sequence spans 25 residues: Glutamine synthetase 2 isozyme (25 aa).

It belongs to the glutamine synthetase family. In terms of assembly, homohexamer.

The protein resides in the plastid. Its subcellular location is the chloroplast. The catalysed reaction is L-glutamate + NH4(+) + ATP = L-glutamine + ADP + phosphate + H(+). In terms of biological role, plays a key role in the nitrogen metabolism of microorganisms, animals and plants. This chain is Glutamine synthetase 2 isozyme, found in Emiliania huxleyi (Coccolithophore).